The sequence spans 243 residues: 23S rRNA (guanosine-2'-O-)-methyltransferase RlmB (243 aa).

S-adenosyl-L-methionine-binding residues include glycine 196, isoleucine 216, and leucine 225.

This sequence belongs to the class IV-like SAM-binding methyltransferase superfamily. RNA methyltransferase TrmH family. RlmB subfamily. In terms of assembly, homodimer.

It is found in the cytoplasm. It carries out the reaction guanosine(2251) in 23S rRNA + S-adenosyl-L-methionine = 2'-O-methylguanosine(2251) in 23S rRNA + S-adenosyl-L-homocysteine + H(+). Functionally, specifically methylates the ribose of guanosine 2251 in 23S rRNA. In Salmonella typhimurium (strain LT2 / SGSC1412 / ATCC 700720), this protein is 23S rRNA (guanosine-2'-O-)-methyltransferase RlmB.